A 389-amino-acid polypeptide reads, in one-letter code: PqqA peptide cyclase (389 aa).

Positions 20–235 (VGLPLWLLAE…TNEYRARLEA (216 aa)) constitute a Radical SAM core domain. [4Fe-4S] cluster contacts are provided by cysteine 34, cysteine 38, and cysteine 41.

This sequence belongs to the radical SAM superfamily. PqqE family. In terms of assembly, interacts with PqqD. The interaction is necessary for activity of PqqE. It depends on [4Fe-4S] cluster as a cofactor.

It carries out the reaction [PQQ precursor protein] + S-adenosyl-L-methionine = E-Y cross-linked-[PQQ precursor protein] + 5'-deoxyadenosine + L-methionine + H(+). It participates in cofactor biosynthesis; pyrroloquinoline quinone biosynthesis. Its function is as follows. Catalyzes the cross-linking of a glutamate residue and a tyrosine residue in the PqqA protein as part of the biosynthesis of pyrroloquinoline quinone (PQQ). The sequence is that of PqqA peptide cyclase from Pseudomonas fluorescens (strain ATCC BAA-477 / NRRL B-23932 / Pf-5).